We begin with the raw amino-acid sequence, 306 residues long: Dermonecrotic toxin LiSicTox-alphaIA1a (306 aa).

An N-terminal signal peptide occupies residues 1–18; the sequence is MLPYIVLVLGCWSVLSQA. Positions 19-26 are excised as a propeptide; it reads AQTDDEER. The active site involves His38. Positions 58 and 60 each coordinate Mg(2+). His74 acts as the Nucleophile in catalysis. 2 disulfides stabilise this stretch: Cys78–Cys84 and Cys80–Cys223. Residue Asp118 participates in Mg(2+) binding.

Belongs to the arthropod phospholipase D family. Class II subfamily. Class IIa sub-subfamily. It depends on Mg(2+) as a cofactor. Expressed by the venom gland.

The protein resides in the secreted. It catalyses the reaction an N-(acyl)-sphingosylphosphocholine = an N-(acyl)-sphingosyl-1,3-cyclic phosphate + choline. The enzyme catalyses an N-(acyl)-sphingosylphosphoethanolamine = an N-(acyl)-sphingosyl-1,3-cyclic phosphate + ethanolamine. It carries out the reaction a 1-acyl-sn-glycero-3-phosphocholine = a 1-acyl-sn-glycero-2,3-cyclic phosphate + choline. The catalysed reaction is a 1-acyl-sn-glycero-3-phosphoethanolamine = a 1-acyl-sn-glycero-2,3-cyclic phosphate + ethanolamine. It catalyses the reaction 1-hexadecanoyl-sn-glycero-3-phosphocholine = 1-hexadecanoyl-sn-glycero-2,3-cyclic phosphate + choline. With respect to regulation, catalytic activity and hemolysis are inhibited by divalent ion chelators (1,10-phenanthroline, EDTA, and EGTA). In terms of biological role, dermonecrotic toxins cleave the phosphodiester linkage between the phosphate and headgroup of certain phospholipids (sphingolipid and lysolipid substrates), forming an alcohol (often choline) and a cyclic phosphate. This toxin acts on sphingomyelin (SM) with high activity. It discriminate between the number of carbon atoms in the substrates, since it prefers SM with six carbons in the fatty acid chain (SM6:0) to other SMs (SM12:0 &gt; SM16:0 &gt; SM18:0 &gt; SM2:0 &gt; SM24:0). It also acts on lysophosphatidylcholine (LPC) (LPC16:0 = LPC12:0 &gt; LPC18:0), and lyso-platelet activating factor (LPAF, an alkyl-LPC) but not on phosphatidylcholine (PC). It may also act on ceramide phosphoethanolamine (CPE), lysophosphatidylcholine (LPC) and lysophosphatidylethanolamine (LPE), but not on lysophosphatidylserine (LPS), and lysophosphatidylglycerol (LPG). It acts by transphosphatidylation, releasing exclusively cyclic phosphate products as second products. In vivo, it induces dermonecrosis, vascular permeability, platelet aggregation, inflammatory response, edema and cytotoxicity against renal epithelial cells. It causes direct nephrotoxicity and is directly toxic to liver. It also induces hemolysis in a complement-dependent manner as well as in a complement-independent manner. The hemolysis provoked in a complement-independent manner is composed of several steps. The toxin binds to erythrocyte membranes, hydrolyzes membrane phospholipids (SM and LPC) thus generating metabolism products that cause hemolysis, probably by provoking an increase of calcium inside cells. The calcium influx is due to the opening of L-type calcium channels, since L-type calcium channel blockers inhibit calcium influx. Is lethal to mice when intraperitoneally injected. The chain is Dermonecrotic toxin LiSicTox-alphaIA1a from Loxosceles intermedia (Brown spider).